The chain runs to 101 residues: Small ribosomal subunit protein uS14 (101 aa).

The protein belongs to the universal ribosomal protein uS14 family. Part of the 30S ribosomal subunit. Contacts proteins S3 and S10.

In terms of biological role, binds 16S rRNA, required for the assembly of 30S particles and may also be responsible for determining the conformation of the 16S rRNA at the A site. This chain is Small ribosomal subunit protein uS14, found in Bartonella quintana (strain Toulouse) (Rochalimaea quintana).